Consider the following 292-residue polypeptide: Protoheme IX farnesyltransferase (292 aa).

A run of 9 helical transmembrane segments spans residues 13-33 (ILFG…QGSI), 35-55 (ILLL…GCVV), 84-104 (VALV…WFGV), 106-126 (GYAF…YSLW), 135-155 (TVIG…AVTH), 161-181 (ALLL…AIAI), 206-226 (IECV…YCFG), 231-251 (FFLI…IIGF), and 263-283 (FFLY…FTYQ).

This sequence belongs to the UbiA prenyltransferase family. Protoheme IX farnesyltransferase subfamily.

Its subcellular location is the cell inner membrane. The catalysed reaction is heme b + (2E,6E)-farnesyl diphosphate + H2O = Fe(II)-heme o + diphosphate. It participates in porphyrin-containing compound metabolism; heme O biosynthesis; heme O from protoheme: step 1/1. Its function is as follows. Converts heme B (protoheme IX) to heme O by substitution of the vinyl group on carbon 2 of heme B porphyrin ring with a hydroxyethyl farnesyl side group. The protein is Protoheme IX farnesyltransferase of Acinetobacter baumannii (strain AB307-0294).